The primary structure comprises 3582 residues: Ubiquitin carboxyl-terminal hydrolase 34 (3582 aa).

A phosphoserine mark is found at Ser352, Ser486, Ser487, and Ser490. Disordered stretches follow at residues 503-533 (EEEE…HQSG), 551-670 (QQRL…ELRN), 682-705 (GESQ…VFNT), 775-801 (HHHH…DGHM), and 1496-1515 (TGSY…DQVE). Positions 510–524 (AAPSPWSPAASPQSS) are enriched in low complexity. Polar residues predominate over residues 560 to 570 (SMQGSSDETAN). Low complexity predominate over residues 571 to 590 (SGEDGSSGPGSSSGHSDGSS). Residues 591 to 609 (NEVNSSHASQSAGSPGSEV) are compositionally biased toward polar residues. Over residues 610-653 (QSEDIADIEALKEEEEEEEEEEEEEEEEDDEEEEDEEEDDDDDD) the composition is skewed to acidic residues. Residues 684 to 697 (SQGTSERNGTNSGT) are compositionally biased toward polar residues. Basic residues predominate over residues 775-798 (HHHHHHHHHHHHHHHHHHHHHHHD). Over residues 1504 to 1514 (PDSDDSSEDQV) the composition is skewed to acidic residues. The residue at position 1506 (Ser1506) is a Phosphoserine. Residues 1931–2276 (VGLTNLGATC…SAYMLFYKRM (346 aa)) enclose the USP domain. Cys1940 serves as the catalytic Nucleophile. His2201 (proton acceptor) is an active-site residue. Ser2525 is modified (phosphoserine). Residues 3369–3484 (SLQEQEAKER…QSNNGRFDDC (116 aa)) form a disordered region. The span at 3373–3384 (QEAKERKTKDDE) shows a compositional bias: basic and acidic residues. Residues Ser3395 and Ser3396 each carry the phosphoserine modification. Position 3418 is a phosphothreonine (Thr3418). Ser3423 and Ser3443 each carry phosphoserine. The segment covering 3463–3484 (DGSHIRSQHAEEQSNNGRFDDC) has biased composition (basic and acidic residues). Phosphoserine is present on Ser3539.

Belongs to the peptidase C19 family. Interacts with AXIN1 and AXIN2.

It catalyses the reaction Thiol-dependent hydrolysis of ester, thioester, amide, peptide and isopeptide bonds formed by the C-terminal Gly of ubiquitin (a 76-residue protein attached to proteins as an intracellular targeting signal).. In terms of biological role, ubiquitin hydrolase that can remove conjugated ubiquitin from AXIN1 and AXIN2, thereby acting as a regulator of Wnt signaling pathway. Acts as an activator of the Wnt signaling pathway downstream of the beta-catenin destruction complex by deubiquitinating and stabilizing AXIN1 and AXIN2, leading to promote nuclear accumulation of AXIN1 and AXIN2 and positively regulate beta-catenin (CTNBB1)-mediated transcription. Recognizes and hydrolyzes the peptide bond at the C-terminal Gly of ubiquitin. Involved in the processing of poly-ubiquitin precursors as well as that of ubiquitinated proteins. In Mus musculus (Mouse), this protein is Ubiquitin carboxyl-terminal hydrolase 34 (Usp34).